A 612-amino-acid chain; its full sequence is Chaperone protein DnaK (612 aa).

The residue at position 174 (T174) is a Phosphothreonine; by autocatalysis. Residues 579-612 form a disordered region; sequence GSAGTGAGSQAGSAAGSGDGQSMDAEFKVKDEDK. Residues 581-597 show a composition bias toward gly residues; it reads AGTGAGSQAGSAAGSGD. A compositionally biased stretch (basic and acidic residues) spans 603–612; sequence AEFKVKDEDK.

The protein belongs to the heat shock protein 70 family.

Its function is as follows. Acts as a chaperone. This chain is Chaperone protein DnaK, found in Symbiobacterium thermophilum (strain DSM 24528 / JCM 14929 / IAM 14863 / T).